A 146-amino-acid chain; its full sequence is Small ribosomal subunit protein uS5 (146 aa).

In terms of domain architecture, S5 DRBM spans 8–71 (FKEVVVNIGR…DDAFKNIIKV (64 aa)).

It belongs to the universal ribosomal protein uS5 family. In terms of assembly, part of the 30S ribosomal subunit. Contacts proteins S4 and S8.

In terms of biological role, with S4 and S12 plays an important role in translational accuracy. Its function is as follows. Located at the back of the 30S subunit body where it stabilizes the conformation of the head with respect to the body. This chain is Small ribosomal subunit protein uS5, found in Wolinella succinogenes (strain ATCC 29543 / DSM 1740 / CCUG 13145 / JCM 31913 / LMG 7466 / NCTC 11488 / FDC 602W) (Vibrio succinogenes).